A 247-amino-acid chain; its full sequence is ATP synthase subunit a, chloroplastic (247 aa).

5 helical membrane-spanning segments follow: residues 38 to 58, 95 to 115, 134 to 154, 199 to 219, and 220 to 240; these read QVLI…TLAV, VPFI…GALL, INTT…AGLT, LVVV…VMFL, and GLFT…AYIG.

The protein belongs to the ATPase A chain family. In terms of assembly, F-type ATPases have 2 components, CF(1) - the catalytic core - and CF(0) - the membrane proton channel. CF(1) has five subunits: alpha(3), beta(3), gamma(1), delta(1), epsilon(1). CF(0) has four main subunits: a, b, b' and c.

The protein localises to the plastid. The protein resides in the chloroplast thylakoid membrane. In terms of biological role, key component of the proton channel; it plays a direct role in the translocation of protons across the membrane. The protein is ATP synthase subunit a, chloroplastic of Vitis vinifera (Grape).